A 148-amino-acid chain; its full sequence is Transcriptional regulator MraZ (148 aa).

SpoVT-AbrB domains are found at residues E5 to E53 and S82 to A125.

It belongs to the MraZ family. Forms oligomers.

It localises to the cytoplasm. The protein resides in the nucleoid. The chain is Transcriptional regulator MraZ from Xylella fastidiosa (strain 9a5c).